A 267-amino-acid polypeptide reads, in one-letter code: Small ribosomal subunit protein uS5 (267 aa).

Residues 1–37 (MADEAPARSGFRGGFGSRGGRGGRGRGRGRWARGRGK) form a disordered region. Gly residues predominate over residues 11–20 (FRGGFGSRGG). Positions 21–34 (RGGRGRGRGRWARG) are enriched in basic residues. Ser-60 bears the Phosphoserine mark. The S5 DRBM domain maps to 85-148 (LKDEVLKIMP…ILAKLSVVPV (64 aa)).

The protein belongs to the universal ribosomal protein uS5 family.

In terms of biological role, component of the ribosome, a large ribonucleoprotein complex responsible for the synthesis of proteins in the cell. The small ribosomal subunit (SSU) binds messenger RNAs (mRNAs) and translates the encoded message by selecting cognate aminoacyl-transfer RNA (tRNA) molecules. The large subunit (LSU) contains the ribosomal catalytic site termed the peptidyl transferase center (PTC), which catalyzes the formation of peptide bonds, thereby polymerizing the amino acids delivered by tRNAs into a polypeptide chain. The nascent polypeptides leave the ribosome through a tunnel in the LSU and interact with protein factors that function in enzymatic processing, targeting, and the membrane insertion of nascent chains at the exit of the ribosomal tunnel. Plays a role in the assembly and function of the 40S ribosomal subunit. Mutations in this protein affects the control of translational fidelity. Involved in nucleolar processing of pre-18S ribosomal RNA and ribosome assembly. Has a specific developmental role during oogenesis. In Drosophila melanogaster (Fruit fly), this protein is Small ribosomal subunit protein uS5 (RpS2).